We begin with the raw amino-acid sequence, 299 residues long: 33 kDa chaperonin (299 aa).

2 cysteine pairs are disulfide-bonded: Cys-234/Cys-236 and Cys-268/Cys-271.

This sequence belongs to the HSP33 family. Post-translationally, under oxidizing conditions two disulfide bonds are formed involving the reactive cysteines. Under reducing conditions zinc is bound to the reactive cysteines and the protein is inactive.

The protein localises to the cytoplasm. In terms of biological role, redox regulated molecular chaperone. Protects both thermally unfolding and oxidatively damaged proteins from irreversible aggregation. Plays an important role in the bacterial defense system toward oxidative stress. The polypeptide is 33 kDa chaperonin (Pseudomonas putida (strain ATCC 700007 / DSM 6899 / JCM 31910 / BCRC 17059 / LMG 24140 / F1)).